Here is a 292-residue protein sequence, read N- to C-terminus: 4-hydroxybenzoate solanesyltransferase (292 aa).

9 helical membrane-spanning segments follow: residues 28–48 (LILM…LPPL), 49–69 (PLLG…CVVN), 97–117 (VGIG…FYLT), 118–138 (PLSF…PGAK), 140–160 (VFPV…LISW), 172–192 (WVLW…YAMA), 217–237 (VGIF…ILML), 239–259 (PLYW…YIQL), and 272–292 (IFGQ…LGWL).

The protein belongs to the UbiA prenyltransferase family. Mg(2+) is required as a cofactor.

The protein resides in the cell inner membrane. It carries out the reaction all-trans-nonaprenyl diphosphate + 4-hydroxybenzoate = 4-hydroxy-3-(all-trans-nonaprenyl)benzoate + diphosphate. Catalyzes the prenylation of para-hydroxybenzoate (PHB) with an all-trans polyprenyl group. Mediates the second step in the final reaction sequence of plastoquinone-9 (PQ-9) biosynthesis, which is the condensation of the polyisoprenoid side chain with PHB, generating the first membrane-bound Q intermediate 4-hydroxy-3-solanesylbenzoate. The sequence is that of 4-hydroxybenzoate solanesyltransferase from Synechocystis sp. (strain ATCC 27184 / PCC 6803 / Kazusa).